The sequence spans 264 residues: Thymidylate synthase (264 aa).

R21 lines the dUMP pocket. Residue H51 participates in (6R)-5,10-methylene-5,6,7,8-tetrahydrofolate binding. 126 to 127 (RR) lines the dUMP pocket. C146 functions as the Nucleophile in the catalytic mechanism. DUMP is bound by residues 166-169 (RSCD), N177, and 207-209 (HLY). Residue D169 participates in (6R)-5,10-methylene-5,6,7,8-tetrahydrofolate binding. A263 contributes to the (6R)-5,10-methylene-5,6,7,8-tetrahydrofolate binding site.

It belongs to the thymidylate synthase family. Bacterial-type ThyA subfamily. As to quaternary structure, homodimer.

Its subcellular location is the cytoplasm. It carries out the reaction dUMP + (6R)-5,10-methylene-5,6,7,8-tetrahydrofolate = 7,8-dihydrofolate + dTMP. It participates in pyrimidine metabolism; dTTP biosynthesis. Its function is as follows. Catalyzes the reductive methylation of 2'-deoxyuridine-5'-monophosphate (dUMP) to 2'-deoxythymidine-5'-monophosphate (dTMP) while utilizing 5,10-methylenetetrahydrofolate (mTHF) as the methyl donor and reductant in the reaction, yielding dihydrofolate (DHF) as a by-product. This enzymatic reaction provides an intracellular de novo source of dTMP, an essential precursor for DNA biosynthesis. The protein is Thymidylate synthase of Escherichia coli (strain 55989 / EAEC).